Here is a 127-residue protein sequence, read N- to C-terminus: NHP2-like protein 1 homolog (127 aa).

Belongs to the eukaryotic ribosomal protein eL8 family.

Its subcellular location is the nucleus. It is found in the nucleolus. Functionally, binds to the 5'-stem-loop of U4 snRNA and may play a role in the late stage of spliceosome assembly. The protein undergoes a conformational change upon RNA-binding. The protein is NHP2-like protein 1 homolog (hoip) of Drosophila melanogaster (Fruit fly).